The following is a 219-amino-acid chain: Thiamine-phosphate synthase (219 aa).

4-amino-2-methyl-5-(diphosphooxymethyl)pyrimidine-binding positions include 44–48 (QFREK) and asparagine 79. The Mg(2+) site is built by aspartate 80 and aspartate 99. Serine 117 is a binding site for 4-amino-2-methyl-5-(diphosphooxymethyl)pyrimidine. A 2-[(2R,5Z)-2-carboxy-4-methylthiazol-5(2H)-ylidene]ethyl phosphate-binding site is contributed by 143–145 (TST). Position 146 (lysine 146) interacts with 4-amino-2-methyl-5-(diphosphooxymethyl)pyrimidine. 2-[(2R,5Z)-2-carboxy-4-methylthiazol-5(2H)-ylidene]ethyl phosphate contacts are provided by residues glycine 175 and 195-196 (IS).

It belongs to the thiamine-phosphate synthase family. Requires Mg(2+) as cofactor.

The catalysed reaction is 2-[(2R,5Z)-2-carboxy-4-methylthiazol-5(2H)-ylidene]ethyl phosphate + 4-amino-2-methyl-5-(diphosphooxymethyl)pyrimidine + 2 H(+) = thiamine phosphate + CO2 + diphosphate. It carries out the reaction 2-(2-carboxy-4-methylthiazol-5-yl)ethyl phosphate + 4-amino-2-methyl-5-(diphosphooxymethyl)pyrimidine + 2 H(+) = thiamine phosphate + CO2 + diphosphate. It catalyses the reaction 4-methyl-5-(2-phosphooxyethyl)-thiazole + 4-amino-2-methyl-5-(diphosphooxymethyl)pyrimidine + H(+) = thiamine phosphate + diphosphate. The protein operates within cofactor biosynthesis; thiamine diphosphate biosynthesis; thiamine phosphate from 4-amino-2-methyl-5-diphosphomethylpyrimidine and 4-methyl-5-(2-phosphoethyl)-thiazole: step 1/1. Functionally, condenses 4-methyl-5-(beta-hydroxyethyl)thiazole monophosphate (THZ-P) and 2-methyl-4-amino-5-hydroxymethyl pyrimidine pyrophosphate (HMP-PP) to form thiamine monophosphate (TMP). The chain is Thiamine-phosphate synthase from Bacillus cereus (strain B4264).